Reading from the N-terminus, the 2329-residue chain is MANYGGHPQTEPHAIPDSILEEKSRKWKQLQGKRYSEKKKFGMSDTQKEEMPPEHVRKVIRDHGDMTSRKYRHDKRVYLGALKYMPHAVLKLLENMPMPWEQIRDVKVLYHITGAITFVNDIPRVIEPVYMAQWGTMWIMMRREKRDRRHFKRMRFPPFDDEEPPLDYADNILDVEPLEPIQMELDPEEDGAVAEWFYDHKPLATTRFVNGPTYRKWAFSIPQMSTLYRLANQLLTDLVDDNYFYLFDMKSFFTAKALNVAIPGGPKFEPLVKDLHTDEDWNEFNDINKVIIRAPIRTEYRIAFPFMYNNLISSLPVQVSWYHTPSVVFIKTEDPDLPAFYYDPLINPIVLSNLKATEENLPEGEEEDEWELPEDVRPIFEDVPLYTDNTANGLALLWAPRPFNLRSGRTRRAVDVPLVKSWYREHCPAGMPVKVRVSYQKLLKVFVLNALKHRPPKPQKRRYLFRSFKATKFFQTTTLDWVEAGLQVLRQGYNMLNLLIHRKNLNYLHLDYNFNLKPVKTLTTKERKKSRFGNAFHLCREILRLTKLVVDAHVQYRLNNVDAYQLADGLQYIFAHVGQLTGMYRYKYKLMRQVRMCKDLKHLIYYRFNTGPVGKGPGCGFWAPGWRVWLFFLRGITPLLERWLGNLLSRQFEGRHSKGVAKTVTKQRVESHFDLELRAAVMHDILDMMPDGIKQNKARVILQHLSEAWRCWKANIPWKVPGLPTPVENMILRYVKAKADWWTNSAHYNRERVRRGATVDKTVCKKNLGRLTRLYLKSEQERQHNYLKDGPYISAEEAVAIYTTTVHWLESRRFSPIPFPPLSYKHDTKLLILALERLKESYSVKNRLNQSQREELALIEQAYDNPHEALSRIKRHMLTQRAFKEVGIEFMDLYTHLIPVYDIEPLEKVTDAYLDQYLWYEADKRRLFPAWVKPGDTEPPPLLTYKWCQGLNNLQDVWETSEGECNVIMETKLEKIAEKMDLTLLNRLLRLIVDHNIADYMTSKNNVLINYKDMNHTNSFGIIRGLQFASFIVQFYGLVLDLLVLGLRRASEIAGPPQCPNEFLQFQDVATEIGHPIRLYCRYIDRVWIMFRFSADEARDLIQRYLTEHPDPNNENIVGYNNKKCWPRDARMRLMKHDVNLGRAVFWDIKNRLPRSITTVEWENSFVSVYSKDNPNMLFDMSGFECRILPKCRTANEEFVHRDGVWNLQNEVTKERTAQCFLKVDEESLSKFHNRIRQILMSSGSTTFTKIVNKWNTALIGLMTYFREAVVNTQELLDLLVKCENKIQTRIKIGLNSKMPSRFPPVVFYTPKEIGGLGMLSMGHVLIPQSDLRWMQQTEAGGVTHFRSGMSHDEDQLIPNLYRYIQPWEAEFVDSVRVWAEYALKRQEANAQNRRLTLEDLDDSWDRGIPRINTLFQKDRHTLAYDKGWRVRTEFKAYQILKQNPFWWTHQRHDGKLWNLNNYRTDMIQALGGVEGILEHTLFRGTYFPTWEGLFWERASGFEESMKFKKLTNAQRSGLNQIPNRRFTLWWSPTINRANVYVGFQVQLDLTGIFMHGKIPTLKISLIQIFRAHLWQKIHESVVMDLCQVFDQELDALEIQTVQKETIHPRKSYKMNSSCADVLLFAQYKWNVSRPSLMADSKDVMDNTTTQKYWLDVQLRWGDYDSHDVERYARAKFLDYTTDNMSIYPSPTGVLIAIDLAYNLYSAYGNWFPGMKPLIRQAMAKIIKANPAFYVLRERIRKGLQLYSSEPTEPYLTSQNYGELFSNQIIWFVDDTNVYRVTIHKTFEGNLTTKPINGAIFIFNPRTGQLFLKIIHTSVWAGQKRLSQLAKWKTAEEVAALIRSLPVEEQPRQIIVTRKAMLDPLEVHLLDFPNIVIKGSELMLPFQAIMKVEKFGDLILKATEPQMVLFNLYDDWLKTISSYTAFSRVVLIMRGMHINPDKTKVILKPDKTTITEPHHIWPTLSDDDWIKVELALKDMILADYGKKNNVNVASLTQSEVRDIILGMEISAPSQQRQQIADIEKQTKEQSQVTATTTRTVNKHGDEIITATTSNYETASFASRTEWRVRAISSTNLHLRTQHIYVNSDDVKDTGYTYILPKNILKKFITISDLRTQIAGFMYGVSPPDNPQVKEIRCIVLVPQTGSHQQVNLPTQLPDHELLRDFEPLGWMHTQPNELPQLSPQDVTTHAKLLTDNISWDGEKTVMITCSFTPGSVSLTAYKLTPSGYEWGKANTDKGNNPKGYMPTHYEKVQMLLSDRFLGYFMVPSNGVWNYNFQGQRWSPAMKFDVCLSNPKEYYHEDHRPVHFHNFKAFDDPLGTGSADREDAFA.

Residues 1–53 (MANYGGHPQTEPHAIPDSILEEKSRKWKQLQGKRYSEKKKFGMSDTQKEEMPP) form a disordered region. Over residues 34–53 (RYSEKKKFGMSDTQKEEMPP) the composition is skewed to basic and acidic residues. The segment at 804–1295 (TTVHWLESRR…KIQTRIKIGL (492 aa)) is reverse transcriptase homology domain. Residues 1296 to 1570 (NSKMPSRFPP…TLKISLIQIF (275 aa)) are linker. The tract at residues 1506 to 1519 (MKFKKLTNAQRSGL) is important for branch point selection. A restriction endonuclease homology domain region spans residues 1574–1745 (LWQKIHESVV…LRERIRKGLQ (172 aa)). Residues 1760 to 2013 (NYGELFSNQI…ILGMEISAPS (254 aa)) form an RNase H homology domain region. The MPN domain maps to 2096 to 2227 (TYILPKNILK…LTAYKLTPSG (132 aa)).

Part of the U5 snRNP complex and of the U4/U6-U5 tri-snRNP complex.

It localises to the nucleus. Its function is as follows. Functions as a scaffold that mediates the ordered assembly of spliceosomal proteins and snRNAs. Required for the assembly of the U4/U6-U5 tri-snRNP complex. Functions as a scaffold that positions spliceosomal U2, U5 and U6 snRNAs at splice sites on pre-mRNA substrates, so that splicing can occur. Interacts with both the 5' and the 3' splice site. This chain is Pre-mRNA-splicing factor 8 homolog (prp-8), found in Caenorhabditis elegans.